Reading from the N-terminus, the 99-residue chain is Large ribosomal subunit protein bL21 (99 aa).

The protein belongs to the bacterial ribosomal protein bL21 family. Part of the 50S ribosomal subunit. Contacts protein L20.

Its function is as follows. This protein binds to 23S rRNA in the presence of protein L20. The chain is Large ribosomal subunit protein bL21 from Mesomycoplasma hyopneumoniae (strain 7448) (Mycoplasma hyopneumoniae).